Consider the following 228-residue polypeptide: Ribonuclease S-1 (228 aa).

The first 27 residues, methionine 1–glycine 27, serve as a signal peptide directing secretion. An RNA-binding site is contributed by glutamine 36. Cysteine 42 and cysteine 49 form a disulfide bridge. Histidine 60 lines the RNA pocket. The active-site Proton donor is histidine 60. A disulfide bridge links cysteine 75 with cysteine 119. An N-linked (GlcNAc...) asparagine glycan is attached at asparagine 87. Residue asparagine 98 to valine 99 coordinates RNA. Asparagine 101 carries N-linked (GlcNAc...) asparagine glycosylation. RNA-binding positions include phenylalanine 108, lysine 111–glutamate 112, and lysine 115–histidine 116. The active site involves glutamate 112. Histidine 116 acts as the Proton acceptor in catalysis. 3 N-linked (GlcNAc...) asparagine glycosylation sites follow: asparagine 144, asparagine 157, and asparagine 175. 2 disulfide bridges follow: cysteine 183-cysteine 222 and cysteine 199-cysteine 210.

It belongs to the RNase T2 family. In terms of processing, N-linked core structure at Asn-87 and Asn-101 contains xylose and fucose or consists of disaccharide (GlcNAc-GlcNAc). N-linked core structure at Asn-144 contains xylose.

It catalyses the reaction a ribonucleotidyl-ribonucleotide-RNA + H2O = a 3'-end 3'-phospho-ribonucleotide-RNA + a 5'-end dephospho-ribonucleoside-RNA + H(+). Self-incompatibility (SI) is the inherited ability of a flowering plant to prevent self-fertilization by discriminating between self and non-self pollen during pollination. In many species, self-incompatibility is controlled by the single, multiallelic locus S. The protein is Ribonuclease S-1 of Pyrus pyrifolia (Chinese pear).